The chain runs to 108 residues: Type III secretion system chaperone SseA (108 aa).

Positions 69 to 97 form a coiled coil; the sequence is NQEAEKDLKKIVSLFKQLEVRLKQLNAQA.

In terms of assembly, binds to SseB and SseD.

It is found in the cytoplasm. In terms of biological role, functions as a type III secretion system (T3SS) chaperone, which is required for SseB and SseD accumulation and secretion. May have a direct role in secretion of SseB and SseD, or may facilitate their correct folding, for efficient secretion and function. Required for survival and replication within epithelial cells and macrophages. The chain is Type III secretion system chaperone SseA (sseA) from Salmonella typhimurium (strain LT2 / SGSC1412 / ATCC 700720).